The following is a 238-amino-acid chain: 1-(5-phosphoribosyl)-5-[(5-phosphoribosylamino)methylideneamino] imidazole-4-carboxamide isomerase (238 aa).

Asp8 functions as the Proton acceptor in the catalytic mechanism. Asp129 (proton donor) is an active-site residue.

This sequence belongs to the HisA/HisF family.

Its subcellular location is the cytoplasm. It catalyses the reaction 1-(5-phospho-beta-D-ribosyl)-5-[(5-phospho-beta-D-ribosylamino)methylideneamino]imidazole-4-carboxamide = 5-[(5-phospho-1-deoxy-D-ribulos-1-ylimino)methylamino]-1-(5-phospho-beta-D-ribosyl)imidazole-4-carboxamide. It functions in the pathway amino-acid biosynthesis; L-histidine biosynthesis; L-histidine from 5-phospho-alpha-D-ribose 1-diphosphate: step 4/9. This Anaeromyxobacter sp. (strain Fw109-5) protein is 1-(5-phosphoribosyl)-5-[(5-phosphoribosylamino)methylideneamino] imidazole-4-carboxamide isomerase.